A 206-amino-acid polypeptide reads, in one-letter code: dTTP/UTP pyrophosphatase (206 aa).

The Proton acceptor role is filled by Asp79.

This sequence belongs to the Maf family. YhdE subfamily. Requires a divalent metal cation as cofactor.

It localises to the cytoplasm. The catalysed reaction is dTTP + H2O = dTMP + diphosphate + H(+). It carries out the reaction UTP + H2O = UMP + diphosphate + H(+). Its function is as follows. Nucleoside triphosphate pyrophosphatase that hydrolyzes dTTP and UTP. May have a dual role in cell division arrest and in preventing the incorporation of modified nucleotides into cellular nucleic acids. The polypeptide is dTTP/UTP pyrophosphatase (Rhizobium etli (strain ATCC 51251 / DSM 11541 / JCM 21823 / NBRC 15573 / CFN 42)).